A 272-amino-acid polypeptide reads, in one-letter code: MMLGLENKLKLYGFNNLTKTLSFNIYDVCYAKSEREQKDYIAYIDEQYNSERLTNILCDVTEMIGAHVLNISKQDYDPQGASVTILISEETLAVKEIDKSCNLGQIDILKTRDTIVGHLDKSHVTVHTYPEYHPDNSIATFRVDIDVSTCGEVSPVNALNYLIGSFDSDIITIDYRVRGFTRDIDGKKLFIDHKITSIQDYIDENTLKKYDAVDINVYQSNIFHTKMLIKEIELQNYLFNRDVYEIKPKQRLEIENNLRKEMIEIFSGTNIY.

The active-site Schiff-base intermediate with substrate; via pyruvic acid is the S122. At S122 the chain carries Pyruvic acid (Ser); by autocatalysis. Residue H127 is the Proton acceptor; for processing activity of the active site. Residue C150 is the Proton donor; for catalytic activity of the active site.

Belongs to the prokaryotic AdoMetDC family. Type 2 subfamily. In terms of assembly, heterooctamer of four alpha and four beta chains arranged as a tetramer of alpha/beta heterodimers. The cofactor is pyruvate. Post-translationally, is synthesized initially as an inactive proenzyme. Formation of the active enzyme involves a self-maturation process in which the active site pyruvoyl group is generated from an internal serine residue via an autocatalytic post-translational modification. Two non-identical subunits are generated from the proenzyme in this reaction, and the pyruvate is formed at the N-terminus of the alpha chain, which is derived from the carboxyl end of the proenzyme. The post-translation cleavage follows an unusual pathway, termed non-hydrolytic serinolysis, in which the side chain hydroxyl group of the serine supplies its oxygen atom to form the C-terminus of the beta chain, while the remainder of the serine residue undergoes an oxidative deamination to produce ammonia and the pyruvoyl group blocking the N-terminus of the alpha chain.

The enzyme catalyses S-adenosyl-L-methionine + H(+) = S-adenosyl 3-(methylsulfanyl)propylamine + CO2. The protein operates within amine and polyamine biosynthesis; S-adenosylmethioninamine biosynthesis; S-adenosylmethioninamine from S-adenosyl-L-methionine: step 1/1. Its function is as follows. Catalyzes the decarboxylation of S-adenosylmethionine to S-adenosylmethioninamine (dcAdoMet), the propylamine donor required for the synthesis of the polyamines spermine and spermidine from the diamine putrescine. This is S-adenosylmethionine decarboxylase proenzyme from Clostridium botulinum (strain Alaska E43 / Type E3).